The primary structure comprises 86 residues: Small ribosomal subunit protein bS20 (86 aa).

The span at 1–27 (MANSKSAKKRAIQAEKRRQHNASRRSM) shows a compositional bias: basic residues. Residues 1-28 (MANSKSAKKRAIQAEKRRQHNASRRSMM) form a disordered region.

Belongs to the bacterial ribosomal protein bS20 family.

Its function is as follows. Binds directly to 16S ribosomal RNA. This is Small ribosomal subunit protein bS20 from Vibrio parahaemolyticus serotype O3:K6 (strain RIMD 2210633).